An 885-amino-acid polypeptide reads, in one-letter code: Isoleucine--tRNA ligase (885 aa).

The short motif at 59-69 (PYANGDLHIGH) is the 'HIGH' region element. L-isoleucyl-5'-AMP is bound at residue E550. Positions 591–595 (KMSKS) match the 'KMSKS' region motif. K594 lines the ATP pocket. Zn(2+)-binding residues include C861, C864, C877, and C880.

This sequence belongs to the class-I aminoacyl-tRNA synthetase family. IleS type 1 subfamily. In terms of assembly, monomer. Requires Zn(2+) as cofactor.

The protein localises to the cytoplasm. The catalysed reaction is tRNA(Ile) + L-isoleucine + ATP = L-isoleucyl-tRNA(Ile) + AMP + diphosphate. Functionally, catalyzes the attachment of isoleucine to tRNA(Ile). As IleRS can inadvertently accommodate and process structurally similar amino acids such as valine, to avoid such errors it has two additional distinct tRNA(Ile)-dependent editing activities. One activity is designated as 'pretransfer' editing and involves the hydrolysis of activated Val-AMP. The other activity is designated 'posttransfer' editing and involves deacylation of mischarged Val-tRNA(Ile). This is Isoleucine--tRNA ligase from Mycoplasma mobile (strain ATCC 43663 / 163K / NCTC 11711) (Mesomycoplasma mobile).